The following is a 325-amino-acid chain: Phospholipid phosphatase-related protein type 1 (325 aa).

N5 carries N-linked (GlcNAc...) asparagine glycosylation. Transmembrane regions (helical) follow at residues 13 to 33 (IIPC…LLAY), 67 to 87 (FITP…IIFI), and 127 to 147 (FTGV…AGQV). An N-linked (GlcNAc...) asparagine glycan is attached at N163. Transmembrane regions (helical) follow at residues 201 to 218 (AALS…ITST), 230 to 247 (VLCL…LNRV), and 257 to 277 (VIAG…CVVH). At S307 the chain carries Phosphoserine. N316 is a glycosylation site (N-linked (GlcNAc...) asparagine).

Belongs to the PA-phosphatase related phosphoesterase family.

It is found in the cell membrane. It localises to the cell projection. The protein localises to the neuron projection. In terms of biological role, may play a role in neurite outgrowth and neurogenesis. This chain is Phospholipid phosphatase-related protein type 1, found in Homo sapiens (Human).